We begin with the raw amino-acid sequence, 158 residues long: Cystin-1 (158 aa).

Residues 1 to 146 are disordered; sequence MGSGSSRSSR…AAISYDHSEE (146 aa). G2 carries the N-myristoyl glycine lipid modification. Composition is skewed to low complexity over residues 19–32 and 39–52; these read ESLPAGPGAAALEG and PVAAAEVPGAAAEE. The short motif at 29-33 is the Ciliary targeting motif element; sequence ALEGG. Residues 65–75 are compositionally biased toward basic and acidic residues; the sequence is DGRDETLRLLD.

In terms of assembly, interacts (when myristoylated) with UNC119 and UNC119B; interaction is required for localization to cilium. In terms of tissue distribution, expressed at high levels in the kidney and pancreas. Moderate expression seen in the skeletal muscle, liver and heart. A weak expression seen in the brain, lung, uterus, prostate, testis, small intestine and colon.

It is found in the cell projection. It localises to the cilium membrane. The protein resides in the cytoplasm. The protein localises to the cytoskeleton. Its subcellular location is the cilium axoneme. In Homo sapiens (Human), this protein is Cystin-1 (CYS1).